We begin with the raw amino-acid sequence, 882 residues long: Holliday junction resolvase MOC1, chloroplastic (882 aa).

Disordered regions lie at residues 87–148 (IRDG…QTPT) and 323–351 (TPAA…PRAA). Positions 91–111 (PNSNSRCSTVRTHATRSKSTG) are enriched in polar residues. Positions 112–125 (PSRATSSGPATAAP) are enriched in low complexity. Residues 134-148 (NDTQDGGLTSEQTPT) are compositionally biased toward polar residues. Residues 323–337 (TPAAASQTPPTTVTS) show a composition bias toward low complexity. Positions 397, 552, 629, and 634 each coordinate Mg(2+). Positions 710–882 (KVERKAQARS…DGGVSGSESE (173 aa)) are disordered. Residues 732–743 (EEPEAQAEEEQA) are compositionally biased toward acidic residues. Composition is skewed to low complexity over residues 744 to 758 (EAGT…GAAA), 769 to 783 (VESG…VAAG), 810 to 819 (SGKSSSKAEA), and 830 to 844 (ASVG…SVGS). Gly residues-rich tracts occupy residues 845–857 (SSGG…GGVK) and 868–882 (AKAG…SESE).

Requires Mg(2+) as cofactor. Mn(2+) serves as cofactor.

It localises to the plastid. It is found in the chloroplast. The enzyme catalyses Endonucleolytic cleavage at a junction such as a reciprocal single-stranded crossover between two homologous DNA duplexes (Holliday junction).. Functionally, a structure-specific endonuclease that resolves Holliday junction (HJ) intermediates during genetic recombination. Cleaves 4-way DNA junctions introducing paired nicks in opposing strands, leaving a 5'-terminal phosphate and a 3'-terminal hydroxyl group that are ligated to produce recombinant products. Mediates chloroplast nucleoid segregation during chloroplast division. In Chlamydomonas reinhardtii (Chlamydomonas smithii), this protein is Holliday junction resolvase MOC1, chloroplastic.